The following is a 2812-amino-acid chain: Polyunsaturated fatty acid synthase subunit A (2812 aa).

Residues 12-472 (DTRIAVIGMS…GANYHAVLEE (461 aa)) form the Ketosynthase family 3 (KS3) domain. Residues Cys-213, His-348, and His-390 each act as for beta-ketoacyl synthase activity in the active site. The Malonyl-CoA:ACP transacylase (MAT) domain maps to 602–913 (LFSGQGAQYT…TVSVNPASGK (312 aa)). Positions 1000-1048 (DEEAKREAARLQKQLEDAQRQLDEAKRAADEANQKLAAAKEEAKSAAAS) form a coiled coil. 3 Carrier domains span residues 1114 to 1193 (ALLA…KAEI), 1232 to 1308 (ERAE…KAEI), and 1342 to 1418 (AKAE…KAEI). O-(pantetheine 4'-phosphoryl)serine is present on residues Ser-1152, Ser-1267, and Ser-1377. Residues 1422–1442 (SAPAPAAAAPAPAAPAPAAAA) form a disordered region. Positions 1423–1442 (APAPAAAAPAPAAPAPAAAA) are enriched in low complexity. Positions 1455-1531 (AKAETVVMEV…EVVDAMKAEI (77 aa)) constitute a Carrier 4 domain. Ser-1490 carries the post-translational modification O-(pantetheine 4'-phosphoryl)serine. The disordered stretch occupies residues 1535-1555 (SAPAPAAAAPAPAAPAPAAAA). The span at 1536 to 1555 (APAPAAAAPAPAAPAPAAAA) shows a compositional bias: low complexity. Carrier domains are found at residues 1568 to 1644 (AKAE…KAEI), 1681 to 1757 (AKAE…KAEI), 1792 to 1868 (AKAE…KAEI), and 1903 to 1979 (AKAE…KAEI). O-(pantetheine 4'-phosphoryl)serine is present on residues Ser-1603, Ser-1716, Ser-1827, and Ser-1938. In terms of domain architecture, Ketoreductase (KR) spans 2257 to 2484 (VVSGGARGIT…VKSICFGPWD (228 aa)). An N-terminal hotdog fold region spans residues 2524–2651 (EILVGNWRTP…RAVVVLSSQG (128 aa)). Residues 2524-2812 (EILVGNWRTP…SVIATDSLAF (289 aa)) form the PKS/mFAS DH domain. Residues 2540–2800 (ETITLHRKIS…NEQGDLFIDV (261 aa)) are dehydratase (DH) domain. Residue His-2559 is the Proton acceptor; for dehydratase activity of the active site. The C-terminal hotdog fold stretch occupies residues 2666–2812 (ADPAAQSAVY…SVIATDSLAF (147 aa)). Asp-2730 acts as the Proton donor; for dehydratase activity in catalysis.

Component of the polyunsaturated fatty acid synthase complex composed of at least ORF-A, ORF-B and ORF-C. The cofactor is pantetheine 4'-phosphate.

It functions in the pathway lipid metabolism; fatty acid biosynthesis. In terms of biological role, poliketide synthase-like protein; part of the polyunsaturated fatty acid synthase composed of the 3 PKS-like subunits A, B and C. While the saturated fatty acids (SFAs) in Thraustochytrium are produced by the conventional fatty acid synthase (FAS) pathway, polyunsaturated fatty acids (PUFAs) including docosahexeanoic acid (DHA) and docosapentaenoic acid (DPA) are synthesized via an anaerobical PKS pathway. PUFA synthase assimilates fatty acyl-CoA, the product of FAS, as the starter unit to synthesize DPA, and this starter unit may be butyryl-CoA, hexanoyl-CoA, or octanoyl-CoA. DPA and DHA biosynthesis seem to differ by the reduction at the N-3 position by PUFA synthase, not the extension of carbon chain. In DHA biosynthesis, PUFA synthase extends the fatty acyl chain from the methyl toward the carboxyl end, and the double bond is formed when the carbon chain is growing, instead of afterward. Therefore, PUFA synthase is unable to transform DPA to DHA, suggesting that DPA is not the precursor of DHA. Moreover, DPA molecule is partly extended by FAS KS domain, so DPA biosynthesis is less dependent on PUFA synthase KS domain than DHA. The protein is Polyunsaturated fatty acid synthase subunit A of Thraustochytrium sp. (strain ATCC 26185 / S-3).